Consider the following 474-residue polypeptide: tRNA-2-methylthio-N(6)-dimethylallyladenosine synthase (474 aa).

The 118-residue stretch at 3-120 folds into the MTTase N-terminal domain; it reads KKLHIKTWGC…LPEMINQVKG (118 aa). Positions 12, 49, 83, 157, 161, and 164 each coordinate [4Fe-4S] cluster. The Radical SAM core domain maps to 143–375; the sequence is RAEGPTAFVS…QERINQQAMA (233 aa). One can recognise a TRAM domain in the interval 378 to 441; the sequence is RRMLGTTQRI…PNSLRGKVIR (64 aa).

The protein belongs to the methylthiotransferase family. MiaB subfamily. Monomer. Requires [4Fe-4S] cluster as cofactor.

The protein resides in the cytoplasm. The enzyme catalyses N(6)-dimethylallyladenosine(37) in tRNA + (sulfur carrier)-SH + AH2 + 2 S-adenosyl-L-methionine = 2-methylsulfanyl-N(6)-dimethylallyladenosine(37) in tRNA + (sulfur carrier)-H + 5'-deoxyadenosine + L-methionine + A + S-adenosyl-L-homocysteine + 2 H(+). In terms of biological role, catalyzes the methylthiolation of N6-(dimethylallyl)adenosine (i(6)A), leading to the formation of 2-methylthio-N6-(dimethylallyl)adenosine (ms(2)i(6)A) at position 37 in tRNAs that read codons beginning with uridine. The chain is tRNA-2-methylthio-N(6)-dimethylallyladenosine synthase from Cronobacter sakazakii (strain ATCC BAA-894) (Enterobacter sakazakii).